A 225-amino-acid chain; its full sequence is MPITSSSETFASFFNDWLCRHRQFVQQLAHLADETTIVTPIEEESLVSNFLSHYLQYYEEKSVAMSVAGDDIYDFFSPPWLSSYEKLILWIGGFKPGMVFKLITTSVNDLTSHQIDQLESIRLETKRRERDLMRRFALLQQSVGDPLLMVPFRRIGVLRLGEGEQPEMEDAMEVLKVEMIKAMKNADQLRCVTVGKVVEVLNPRQSIKLLRAAGEFYLRLRDLGV.

The DOG1 domain maps to 7–225; it reads SETFASFFND…FYLRLRDLGV (219 aa).

In terms of biological role, may be involved in the regulation of abscisic acid (ABA) sensitivity. This Arabidopsis thaliana (Mouse-ear cress) protein is Protein ZW2.